The primary structure comprises 413 residues: Prophage integrase IntA (413 aa).

One can recognise a Core-binding (CB) domain in the interval 105–186 (NTFLLVAERW…RINEVMIYAQ (82 aa)). Residues 209–386 (KNMPSIRPDQ…DYLEQRRPMM (178 aa)) enclose the Tyr recombinase domain. Catalysis depends on residues arginine 248, lysine 275, histidine 337, arginine 340, and histidine 363. The O-(3'-phospho-DNA)-tyrosine intermediate role is filled by tyrosine 373.

It belongs to the 'phage' integrase family.

Functionally, integrase is necessary for integration of the phage into the host genome by site-specific recombination. In conjunction with excisionase, integrase is also necessary for excision of the prophage from the host genome. Part of the cryptic P4-like prophage CP4-57, it excises the prophage when overexpressed, which also requires integration host factor (encoded by ihfA and ihfB). Overexpression of AlpA leads to excision of the CP4-57 prophage, which inactivates ssrA (the gene upstream of the prophage) that encodes tmRNA which is required to rescue stalled ribosomes in a process known as trans-translation. This chain is Prophage integrase IntA (intA), found in Escherichia coli (strain K12).